We begin with the raw amino-acid sequence, 287 residues long: 4-hydroxybenzoate octaprenyltransferase (287 aa).

A run of 6 helical transmembrane segments spans residues 41–61, 89–109, 133–153, 158–178, 202–224, and 266–286; these read WPLL…GCAM, WEAV…ILPL, FFAI…PMAF, DTVP…SVAY, FGRF…YVWI, and HNNW…LLAG.

It belongs to the UbiA prenyltransferase family. Mg(2+) is required as a cofactor.

It localises to the cell inner membrane. It carries out the reaction all-trans-octaprenyl diphosphate + 4-hydroxybenzoate = 4-hydroxy-3-(all-trans-octaprenyl)benzoate + diphosphate. Its pathway is cofactor biosynthesis; ubiquinone biosynthesis. Functionally, catalyzes the prenylation of para-hydroxybenzoate (PHB) with an all-trans polyprenyl group. Mediates the second step in the final reaction sequence of ubiquinone-8 (UQ-8) biosynthesis, which is the condensation of the polyisoprenoid side chain with PHB, generating the first membrane-bound Q intermediate 3-octaprenyl-4-hydroxybenzoate. This is 4-hydroxybenzoate octaprenyltransferase from Burkholderia cenocepacia (strain HI2424).